The following is a 576-amino-acid chain: Eukaryotic translation initiation factor 3 subunit L (576 aa).

Positions 330-536 constitute a PCI domain; sequence DAIRVFANIL…IHIADTKVAR (207 aa).

It belongs to the eIF-3 subunit L family. In terms of assembly, component of the eukaryotic translation initiation factor 3 (eIF-3) complex, which is composed of 13 subunits: eif3a, eif3b, eif3c, eif3d, eif3e, eif3f, eif3g, eif3h, eif3i, eif3j, eif3k, eif3l and eif3m.

It is found in the cytoplasm. Functionally, component of the eukaryotic translation initiation factor 3 (eIF-3) complex, which is involved in protein synthesis of a specialized repertoire of mRNAs and, together with other initiation factors, stimulates binding of mRNA and methionyl-tRNAi to the 40S ribosome. The eIF-3 complex specifically targets and initiates translation of a subset of mRNAs involved in cell proliferation. The protein is Eukaryotic translation initiation factor 3 subunit L (eif3l) of Danio rerio (Zebrafish).